The following is a 283-amino-acid chain: Elongation factor Ts (283 aa).

The involved in Mg(2+) ion dislocation from EF-Tu stretch occupies residues 80–83 (TDFV).

This sequence belongs to the EF-Ts family.

It is found in the cytoplasm. Functionally, associates with the EF-Tu.GDP complex and induces the exchange of GDP to GTP. It remains bound to the aminoacyl-tRNA.EF-Tu.GTP complex up to the GTP hydrolysis stage on the ribosome. This Enterobacter sp. (strain 638) protein is Elongation factor Ts.